Consider the following 500-residue polypeptide: Proline--tRNA ligase (500 aa).

This sequence belongs to the class-II aminoacyl-tRNA synthetase family. ProS type 3 subfamily. In terms of assembly, homodimer.

The protein localises to the cytoplasm. The enzyme catalyses tRNA(Pro) + L-proline + ATP = L-prolyl-tRNA(Pro) + AMP + diphosphate. Its function is as follows. Catalyzes the attachment of proline to tRNA(Pro) in a two-step reaction: proline is first activated by ATP to form Pro-AMP and then transferred to the acceptor end of tRNA(Pro). This chain is Proline--tRNA ligase, found in Paramagnetospirillum magneticum (strain ATCC 700264 / AMB-1) (Magnetospirillum magneticum).